We begin with the raw amino-acid sequence, 100 residues long: Urease subunit gamma (100 aa).

Belongs to the urease gamma subunit family. As to quaternary structure, heterotrimer of UreA (gamma), UreB (beta) and UreC (alpha) subunits. Three heterotrimers associate to form the active enzyme.

The protein resides in the cytoplasm. The catalysed reaction is urea + 2 H2O + H(+) = hydrogencarbonate + 2 NH4(+). Its pathway is nitrogen metabolism; urea degradation; CO(2) and NH(3) from urea (urease route): step 1/1. The polypeptide is Urease subunit gamma (Acinetobacter baumannii (strain AB307-0294)).